Consider the following 364-residue polypeptide: Capsular polysaccharide phosphotransferase cps1A (364 aa).

Belongs to the stealth family.

Part of a capsular polysaccharide synthesis locus. This Actinobacillus pleuropneumoniae (Haemophilus pleuropneumoniae) protein is Capsular polysaccharide phosphotransferase cps1A (cps1A).